A 601-amino-acid polypeptide reads, in one-letter code: Elongation factor 4 (601 aa).

The tr-type G domain occupies 7 to 189; that stretch reads ELIRNFSIIA…ALVTRLPPPK (183 aa). GTP-binding positions include 19 to 24 and 136 to 139; these read DHGKST and NKID.

This sequence belongs to the TRAFAC class translation factor GTPase superfamily. Classic translation factor GTPase family. LepA subfamily.

The protein resides in the cell inner membrane. The catalysed reaction is GTP + H2O = GDP + phosphate + H(+). Required for accurate and efficient protein synthesis under certain stress conditions. May act as a fidelity factor of the translation reaction, by catalyzing a one-codon backward translocation of tRNAs on improperly translocated ribosomes. Back-translocation proceeds from a post-translocation (POST) complex to a pre-translocation (PRE) complex, thus giving elongation factor G a second chance to translocate the tRNAs correctly. Binds to ribosomes in a GTP-dependent manner. The chain is Elongation factor 4 from Acidiphilium cryptum (strain JF-5).